A 618-amino-acid polypeptide reads, in one-letter code: Glucose starvation modulator protein 1 (618 aa).

The zn(2)-C6 fungal-type DNA-binding region spans 20 to 48; the sequence is CEFCHTKHIQCDVGRPCQNCLKRNIGKFC. The segment at 325–352 is disordered; the sequence is ANANTHPSHNAKLESECDSSSHSDADLE. Basic and acidic residues predominate over residues 335 to 352; it reads AKLESECDSSSHSDADLE. Positions 466–538 constitute a PAS domain; that stretch reads LLDLENMAKL…QIFNELLAFG (73 aa).

It belongs to the ERT1/acuK family.

It is found in the nucleus. In terms of biological role, transcription factor which regulates nonfermentable carbon utilization. Binds specifically to 5'-CGGN(8)CGG-3' and 5'-CGGN(9)CGG-3' sequences in the promoter region. The chain is Glucose starvation modulator protein 1 (GSM1) from Saccharomyces cerevisiae (strain ATCC 204508 / S288c) (Baker's yeast).